A 402-amino-acid polypeptide reads, in one-letter code: MYYHNQHQGKSILSSSRMPISSERHPFLRGNGTGDSGLILSTDAKPRLKWTPDLHERFVEAVNQLGGGDKATPKTIMKVMGIPGLTLYHLKSHLQKYRLSKNLNGQANSSLNKTSVMTMVEENPPEVDESHSESLSIGPQPSMNLPISDALQMQIEVQRRLHEQLEVQRHLQLRIEAQGKYLQSILEKAQETLGRQNLGAAGIEATKAQLSELVSKVSADYPDSSFLEPKELQNLHHQQMQKTYPPNSSLDSCLTSSEGTQKAPKMLDNRLGLRTYIGDSTSEQKEIMEEPFFHRMELTWAEEESLRENHNRPYLSTMVNNAEPRISSSRRSPGRLSIGVGLHEHRGRSSNNSEYTEERFNENNEDCKLETHTRTALDLNTHDENYGTTRPKQFDLNGFSWN.

An HTH myb-type domain is found at 42–102 (TDAKPRLKWT…HLQKYRLSKN (61 aa)). The segment at residues 73-98 (PKTIMKVMGIPGLTLYHLKSHLQKYR) is a DNA-binding region (H-T-H motif). Positions 148–168 (SDALQMQIEVQRRLHEQLEVQ) form a coiled coil. The LHEQLE motif lies at 161-166 (LHEQLE). Residues 238 to 260 (QQMQKTYPPNSSLDSCLTSSEGT) show a composition bias toward polar residues. Disordered regions lie at residues 238-266 (QQMQ…APKM), 344-363 (EHRG…FNEN), and 382-402 (HDEN…FSWN).

It belongs to the MYB-CC family. Isoforms 1 and 2: homodimer. Isoform 3: loss of dimerization. As to expression, expressed in phloem and/or cambium.

It localises to the nucleus. Functionally, transcription factor that may act on the GAL1 promoter. Acts redundantly with MYR2 as a repressor of flowering and organ elongation under decreased light intensity. Represses gibberellic acid (GA)-dependent responses and affects levels of bioactive GA. This Arabidopsis thaliana (Mouse-ear cress) protein is Myb-related protein 1.